Consider the following 199-residue polypeptide: Interleukin-11 (199 aa).

The first 21 residues, methionine 1–alanine 21, serve as a signal peptide directing secretion. An important for interaction with IL11RA and for the stimulation of cell proliferation region spans residues histidine 182–arginine 190.

This sequence belongs to the IL-6 superfamily. As to quaternary structure, interacts with IL11RA to associate with IL6ST, giving rise to a multimeric signaling complex.

The protein resides in the secreted. Functionally, cytokine that stimulates the proliferation of hematopoietic stem cells and megakaryocyte progenitor cells and induces megakaryocyte maturation resulting in increased platelet production. Also promotes the proliferation of hepatocytes in response to liver damage. Binding to its receptor formed by IL6ST and IL11RA activates a signaling cascade that promotes cell proliferation. Signaling leads to the activation of intracellular protein kinases and the phosphorylation of STAT3. The interaction with the membrane-bound IL11RA and IL6ST stimulates 'classic signaling', whereas the binding of IL11 and soluble IL11RA to IL6ST stimulates 'trans-signaling'. The protein is Interleukin-11 of Rattus norvegicus (Rat).